Here is a 119-residue protein sequence, read N- to C-terminus: Large ribosomal subunit protein uL18 (119 aa).

Belongs to the universal ribosomal protein uL18 family. In terms of assembly, part of the 50S ribosomal subunit; part of the 5S rRNA/L5/L18/L25 subcomplex. Contacts the 5S and 23S rRNAs.

Its function is as follows. This is one of the proteins that bind and probably mediate the attachment of the 5S RNA into the large ribosomal subunit, where it forms part of the central protuberance. This is Large ribosomal subunit protein uL18 from Staphylococcus aureus (strain bovine RF122 / ET3-1).